The sequence spans 1155 residues: DNA-directed RNA polymerase subunit beta (1155 aa).

Belongs to the RNA polymerase beta chain family. As to quaternary structure, the RNAP catalytic core consists of 2 alpha, 1 beta, 1 beta' and 1 omega subunit. When a sigma factor is associated with the core the holoenzyme is formed, which can initiate transcription.

It carries out the reaction RNA(n) + a ribonucleoside 5'-triphosphate = RNA(n+1) + diphosphate. DNA-dependent RNA polymerase catalyzes the transcription of DNA into RNA using the four ribonucleoside triphosphates as substrates. The sequence is that of DNA-directed RNA polymerase subunit beta from Borreliella burgdorferi (strain ZS7) (Borrelia burgdorferi).